Here is a 235-residue protein sequence, read N- to C-terminus: AA9 family lytic polysaccharide monooxygenase D (235 aa).

An N-terminal signal peptide occupies residues 1 to 18 (MKAFFAVLAVVSAPFVLG). A Cu(2+)-binding site is contributed by His-19. Ser-29 is a glycosylation site (O-linked (Man...) serine). Cys-61 and Cys-181 are joined by a disulfide. His-94 contributes to the Cu(2+) binding site. His-167 and Gln-176 together coordinate O2. Tyr-178 is a binding site for Cu(2+). The N-linked (GlcNAc...) asparagine glycan is linked to Asn-221.

This sequence belongs to the polysaccharide monooxygenase AA9 family. Cu(2+) serves as cofactor.

It localises to the secreted. It carries out the reaction [(1-&gt;4)-beta-D-glucosyl]n+m + reduced acceptor + O2 = 4-dehydro-beta-D-glucosyl-[(1-&gt;4)-beta-D-glucosyl]n-1 + [(1-&gt;4)-beta-D-glucosyl]m + acceptor + H2O.. Functionally, lytic polysaccharide monooxygenase (LPMO) that depolymerizes crystalline and amorphous polysaccharides via the oxidation of scissile alpha- or beta-(1-4)-glycosidic bonds, yielding only C1 oxidation products. Catalysis by LPMOs requires the reduction of the active-site copper from Cu(II) to Cu(I) by a reducing agent and H(2)O(2) or O(2) as a cosubstrate. The sequence is that of AA9 family lytic polysaccharide monooxygenase D from Phanerodontia chrysosporium (White-rot fungus).